Consider the following 186-residue polypeptide: Large ribosomal subunit protein uL5 (186 aa).

It belongs to the universal ribosomal protein uL5 family. Part of the 50S ribosomal subunit; part of the 5S rRNA/L5/L18/L25 subcomplex. Contacts the 5S rRNA and the P site tRNA. Forms a bridge to the 30S subunit in the 70S ribosome.

This is one of the proteins that bind and probably mediate the attachment of the 5S RNA into the large ribosomal subunit, where it forms part of the central protuberance. In the 70S ribosome it contacts protein S13 of the 30S subunit (bridge B1b), connecting the 2 subunits; this bridge is implicated in subunit movement. Contacts the P site tRNA; the 5S rRNA and some of its associated proteins might help stabilize positioning of ribosome-bound tRNAs. The sequence is that of Large ribosomal subunit protein uL5 from Karelsulcia muelleri (strain GWSS) (Sulcia muelleri).